The chain runs to 625 residues: Thrombopoietin receptor (625 aa).

Residues 1–25 (MPSWALFMVTSCLLLALPNQAQVTS) form the signal peptide. Residues 26-482 (QDVFLLALGT…RVSTGSETAW (457 aa)) lie on the Extracellular side of the membrane. Residue Asn-117 is glycosylated (N-linked (GlcNAc...) asparagine). 2 Fibronectin type-III domains span residues 178 to 270 (NATA…PVTV) and 383 to 479 (PTPS…TGSE). Residues 465-469 (WSAWS) carry the WSXWS motif motif. A helical transmembrane segment spans residues 483–504 (ITLVTALLLVLSLSALLGLLLL). Over 505–625 (KWQFPAHYRR…YLPLSYWQQP (121 aa)) the chain is Cytoplasmic. The short motif at 519 to 527 (LWPSLPDLH) is the Box 1 motif element. Residues Lys-544 and Lys-564 each participate in a glycyl lysine isopeptide (Lys-Gly) (interchain with G-Cter in ubiquitin) cross-link. Tyr-616 and Tyr-621 each carry phosphotyrosine.

It belongs to the type I cytokine receptor family. Type 1 subfamily. Homodimer. Interacts with ATXN2L. Interacts with JAK2 and TYK2; these interactions increase MPL localization to the cell membrane. Interacts with THPO. Interacts with SHIP/INPP5D. Interacts with kinases BTK and SYK. In terms of processing, ubiquitination at Lys-544 and Lys-564 targets MPL for degradation by both the lysosomal and proteasomal pathways. The E3 ubiquitin-protein ligase CBL significantly contributes to this ubiquitination.

The protein resides in the cell membrane. It is found in the golgi apparatus. Its subcellular location is the cell surface. Its function is as follows. Receptor for thrombopoietin that regulates hematopoietic stem cell renewal, megakaryocyte differentiation, and platelet formation. Upon activation by THPO, induces rapid tyrosine phosphorylation and activation of JAK2, providing docking sites for many signaling proteins such as STAT5, SHIP/INPP5D, GRB2, SOS1 and PI3K. In turn, These signaling cascades lead to the proliferation, survival, and differentiation of megakaryocytes, ultimately leading to increased platelet production. Acts as an inhibitor of thrombopoietin signaling by promoting protein down-regulation of full-length isoform Mpl-fl. This is Thrombopoietin receptor (Mpl) from Mus musculus (Mouse).